The following is a 287-amino-acid chain: MAGGREIKTKIKSVQNTRKVTRALEMVSASKIRKAQERMKTSRPYAQAMKQVIGHLAQASTDFQHPFLIEREQVKRVGYIVISSDRGLAGGLNNNLFRKMLGEVRPWQGTGAEIDVVTIGQKASAFFRRIKVNMVGSVTHLGDSPQVEQLIGVIKVMIDAFIEGKVDRVYLVYNRFVNTMTQKASFDQLLPLPAAEHKVAHHDWDYLYEPDAASVLEHVMTRYIESLVYQAVLENVASEHAARMVAMKAASDNANKMIGTLQLVYNKARQAAITQEISEIVSGAAAV.

It belongs to the ATPase gamma chain family. In terms of assembly, F-type ATPases have 2 components, CF(1) - the catalytic core - and CF(0) - the membrane proton channel. CF(1) has five subunits: alpha(3), beta(3), gamma(1), delta(1), epsilon(1). CF(0) has three main subunits: a, b and c.

It localises to the cell inner membrane. Its function is as follows. Produces ATP from ADP in the presence of a proton gradient across the membrane. The gamma chain is believed to be important in regulating ATPase activity and the flow of protons through the CF(0) complex. The sequence is that of ATP synthase gamma chain from Xanthomonas oryzae pv. oryzae (strain MAFF 311018).